Here is a 114-residue protein sequence, read N- to C-terminus: Large ribosomal subunit protein bL19 (114 aa).

This sequence belongs to the bacterial ribosomal protein bL19 family.

In terms of biological role, this protein is located at the 30S-50S ribosomal subunit interface and may play a role in the structure and function of the aminoacyl-tRNA binding site. This is Large ribosomal subunit protein bL19 from Clavibacter michiganensis subsp. michiganensis (strain NCPPB 382).